We begin with the raw amino-acid sequence, 78 residues long: MANIKSNLKRNKQNRARHTVVHSQTSAVKTQIKKTQASKSQKDLSLAYKKIDSALAKGIIKQNKADRLKSRLALNVAR.

Positions 1–34 are disordered; it reads MANIKSNLKRNKQNRARHTVVHSQTSAVKTQIKK. Residues 7–20 are compositionally biased toward basic residues; it reads NLKRNKQNRARHTV. Positions 21–34 are enriched in polar residues; that stretch reads VHSQTSAVKTQIKK.

Belongs to the bacterial ribosomal protein bS20 family.

Binds directly to 16S ribosomal RNA. The chain is Small ribosomal subunit protein bS20 from Malacoplasma penetrans (strain HF-2) (Mycoplasma penetrans).